The following is a 75-amino-acid chain: MKLLFFTALVLVVISLIEVEAENERACIPLEKECTKTPGNCCSGLKCDCYRRFEQGVAKGIQCWCIEKDVTYKGV.

The signal sequence occupies residues 1–21; it reads MKLLFFTALVLVVISLIEVEA. A propeptide spanning residues 22 to 25 is cleaved from the precursor; it reads ENER.

The protein belongs to the neurotoxin 19 (CSTX) family. 06 (U6-Lctx) subfamily. Contains 4 disulfide bonds. In terms of tissue distribution, expressed by the venom gland.

The protein resides in the secreted. The polypeptide is U6-lycotoxin-Ls1d (Lycosa singoriensis (Wolf spider)).